A 46-amino-acid chain; its full sequence is DNA-directed RNA polymerase subunit Rpo12 (46 aa).

Zn(2+)-binding residues include Cys9, Cys24, and Cys27.

Belongs to the archaeal Rpo12/eukaryotic RPC10 RNA polymerase subunit family. Part of the RNA polymerase complex. Interacts with Rpo3. Forms an Rpo3-Rpo10-Rpo11-Rpo12 complex upon coexpression. It depends on Zn(2+) as a cofactor.

The protein localises to the cytoplasm. It carries out the reaction RNA(n) + a ribonucleoside 5'-triphosphate = RNA(n+1) + diphosphate. Functionally, DNA-dependent RNA polymerase (RNAP) catalyzes the transcription of DNA into RNA using the four ribonucleoside triphosphates as substrates. The polypeptide is DNA-directed RNA polymerase subunit Rpo12 (Methanocaldococcus jannaschii (strain ATCC 43067 / DSM 2661 / JAL-1 / JCM 10045 / NBRC 100440) (Methanococcus jannaschii)).